A 493-amino-acid polypeptide reads, in one-letter code: Reticulophagy regulator 1 (493 aa).

The interval 1-52 is disordered; the sequence is MASPAPPEPAEQGSPALAAAPQAPPPPTRAPPEEPEGAAPPEEGAAAGAGRQ. Residues 1–55 are Cytoplasmic-facing; it reads MASPAPPEPAEQGSPALAAAPQAPPPPTRAPPEEPEGAAPPEEGAAAGAGRQVEE. Low complexity predominate over residues 37–52; the sequence is GAAPPEEGAAAGAGRQ. The chain crosses the membrane as a helical span at residues 56–76; sequence AAGGVAAVVTWLLGEPALWLG. Residues 77-87 are Lumenal-facing; the sequence is GRADELLSWKR. Residues 80–229 are reticulon homology domain; it reads DELLSWKRPL…LLCAFLCPLF (150 aa). The chain crosses the membrane as a helical span at residues 88 to 108; the sequence is PLHSLLAFVGANLVFWFLALT. The Cytoplasmic portion of the chain corresponds to 109–114; sequence PWRVYH. A helical transmembrane segment spans residues 115–135; that stretch reads LISVMILTRVIMQIIKDMILS. At 136–204 the chain is on the lumenal side; that stretch reads RTRGAQLWRS…LVCSVCTFFT (69 aa). Phosphoserine is present on serine 145. Phosphoserine; by CAMK2B is present on serine 147. At serine 149 the chain carries Phosphoserine. Residues 205-225 form a helical membrane-spanning segment; the sequence is ILGSYIPGVILSYLLLLCAFL. The Cytoplasmic portion of the chain corresponds to 226-493; it reads CPLFKCNDIG…GFLSNLLGGH (268 aa). Residues 315–326 show a composition bias toward polar residues; sequence FNLSEGYTPQTD. Disordered stretches follow at residues 315-394 and 435-493; these read FNLS…GLSL and AAPS…LGGH. Residues 330-344 show a composition bias toward basic and acidic residues; the sequence is DLDRPSEEVFSRDLS. The residue at position 353 (threonine 353) is a Phosphothreonine. Over residues 368–388 the composition is skewed to basic and acidic residues; sequence ELKRKKEQLDGGPRRSTEKKS. Acidic residues predominate over residues 441-463; the sequence is EDTDTEEGDDFELLDQSELDQIE. The short motif at 449 to 454 is the LIR motif element; it reads DDFELL. Residues 467–486 show a composition bias toward polar residues; it reads GLSQDQEAEAQQNKKSSGFL.

It belongs to the RETREG family. Homooligomer; oligomerization is enhanced following endoplasmic reticulum stress and is mediated by the reticulon homology domain. Interacts with ATG8 family modifier proteins MAP1LC3A, MAP1LC3B, GABARAP, GABARAPL1 and GABARAPL2. Phosphorylation at Ser-147 by CAMK2B enhances oligomerization and membrane scission and reticulophagy activity.

It is found in the golgi apparatus. The protein localises to the cis-Golgi network membrane. The protein resides in the endoplasmic reticulum membrane. Endoplasmic reticulum (ER)-anchored autophagy regulator which mediates ER delivery into lysosomes through sequestration into autophagosomes. Promotes membrane remodeling and ER scission via its membrane bending capacity and targets the fragments into autophagosomes via interaction with ATG8 family proteins. Active under basal conditions. Required for collagen quality control in a LIR motif-dependent manner. Required for long-term survival of nociceptive and autonomic ganglion neurons. This is Reticulophagy regulator 1 (RETREG1) from Bos taurus (Bovine).